The sequence spans 859 residues: Active breakpoint cluster region-related protein (859 aa).

The interval 26–84 (TDEYDGEGNEEQKGPPEGSETMPYIDESPTMSPQLSARSQGGGDGVSPTPPEGLAPGVE) is disordered. Over residues 54–64 (PTMSPQLSARS) the composition is skewed to polar residues. Ser57 is subject to Phosphoserine. A DH domain is found at 91 to 284 (MRKLVLSGFL…QNFLSSINED (194 aa)). Positions 301 to 459 (QLVKDGFLVE…WREAIQKLQK (159 aa)) constitute a PH domain. One can recognise a C2 domain in the interval 484-613 (TVHNIPVTSN…ETKNWHTDVI (130 aa)). The Rho-GAP domain occupies 647-845 (VKISVVTKRE…YYLQHPPISF (199 aa)).

In terms of assembly, interacts with DLG4. Highly enriched in the brain. Much weaker expression in heart, lung and muscle.

It is found in the cell projection. The protein localises to the dendritic spine. The protein resides in the axon. It localises to the synapse. Protein with a unique structure having two opposing regulatory activities toward small GTP-binding proteins. The C-terminus is a GTPase-activating protein domain which stimulates GTP hydrolysis by RAC1, RAC2 and CDC42. Accelerates the intrinsic rate of GTP hydrolysis of RAC1 or CDC42, leading to down-regulation of the active GTP-bound form. The central Dbl homology (DH) domain functions as a guanine nucleotide exchange factor (GEF) that modulates the GTPases CDC42, RHOA and RAC1. Promotes the conversion of CDC42, RHOA and RAC1 from the GDP-bound to the GTP-bound form. Functions as an important negative regulator of neuronal RAC1 activity. Regulates macrophage functions such as CSF-1 directed motility and phagocytosis through the modulation of RAC1 activity. The sequence is that of Active breakpoint cluster region-related protein from Homo sapiens (Human).